The primary structure comprises 338 residues: 4-hydroxythreonine-4-phosphate dehydrogenase (338 aa).

2 residues coordinate substrate: histidine 136 and threonine 137. The a divalent metal cation site is built by histidine 173, histidine 218, and histidine 273. 3 residues coordinate substrate: lysine 281, asparagine 290, and arginine 299.

The protein belongs to the PdxA family. In terms of assembly, homodimer. The cofactor is Zn(2+). It depends on Mg(2+) as a cofactor. Co(2+) serves as cofactor.

It localises to the cytoplasm. It catalyses the reaction 4-(phosphooxy)-L-threonine + NAD(+) = 3-amino-2-oxopropyl phosphate + CO2 + NADH. Its pathway is cofactor biosynthesis; pyridoxine 5'-phosphate biosynthesis; pyridoxine 5'-phosphate from D-erythrose 4-phosphate: step 4/5. Functionally, catalyzes the NAD(P)-dependent oxidation of 4-(phosphooxy)-L-threonine (HTP) into 2-amino-3-oxo-4-(phosphooxy)butyric acid which spontaneously decarboxylates to form 3-amino-2-oxopropyl phosphate (AHAP). This is 4-hydroxythreonine-4-phosphate dehydrogenase from Ralstonia nicotianae (strain ATCC BAA-1114 / GMI1000) (Ralstonia solanacearum).